A 263-amino-acid chain; its full sequence is uncharacterized protein (263 aa).

This sequence belongs to the A.longa ORF167/ORF288 family.

The protein resides in the plastid. This is an uncharacterized protein from Euglena longa (Euglenophycean alga).